Consider the following 445-residue polypeptide: MASMPKPNQSARGRVTVVLGSQWGDEGKGKLTDMLAGEMDICARCAGGNNAGHTIVANSGPDNVKTKFDFHLLPSGLVNPKCIGFIGSGVVMHVPSFFSELDTIEKKGLKCDNRLFVSDRTHLVFDFHQVVDGLKEVELGGSSIGTTKKGIGPAYSSKASRSGLRVHHLYDFDTFAAKFRKLVEGRFKRYGNFEYDTEGEIARYRAFAERLRPFVVDGVTFIHSMLSSNRRVLVEGANALMLDLDYGTYPFVTSSSTGIGGVCTGLGIPPQCIGGVIGVMKAYTSRVGAGPFPTELNDEIMTHLQEVGAEYGTTTGRRRRCGWLDLVMMRYSCLINGYTCLNLTKLDVLDNLPEIKVATTYMLGDKELSSFPADLNILAKVDVQYKTFKGWRGPISNCTSYEQLPDTCREYIEFIENFLGVHIEWIGVGPGREAMVHRPLPPHEM.

GTP-binding positions include G24–K30 and G52–T54. The Proton acceptor role is filled by D25. Mg(2+) contacts are provided by D25 and G52. Residues D25–K28, N50–H53, T147, R161, N238, T253, and R317 contribute to the IMP site. The active-site Proton donor is H53. T313–R319 contacts substrate. Residues R319, K345–D347, and G427–G429 each bind GTP.

Belongs to the adenylosuccinate synthetase family. In terms of assembly, homodimer. The cofactor is Mg(2+).

It localises to the cytoplasm. It carries out the reaction IMP + L-aspartate + GTP = N(6)-(1,2-dicarboxyethyl)-AMP + GDP + phosphate + 2 H(+). It participates in purine metabolism; AMP biosynthesis via de novo pathway; AMP from IMP: step 1/2. Functionally, plays an important role in the de novo pathway and in the salvage pathway of purine nucleotide biosynthesis. Catalyzes the first committed step in the biosynthesis of AMP from IMP. The protein is Adenylosuccinate synthetase of Malassezia globosa (strain ATCC MYA-4612 / CBS 7966) (Dandruff-associated fungus).